The chain runs to 128 residues: Large ribosomal subunit protein bL12 (128 aa).

It belongs to the bacterial ribosomal protein bL12 family. In terms of assembly, homodimer. Part of the ribosomal stalk of the 50S ribosomal subunit. Forms a multimeric L10(L12)X complex, where L10 forms an elongated spine to which 2 to 4 L12 dimers bind in a sequential fashion. Binds GTP-bound translation factors.

Its function is as follows. Forms part of the ribosomal stalk which helps the ribosome interact with GTP-bound translation factors. Is thus essential for accurate translation. The sequence is that of Large ribosomal subunit protein bL12 from Methylobacillus flagellatus (strain ATCC 51484 / DSM 6875 / VKM B-1610 / KT).